The primary structure comprises 189 residues: Glucose-6-phosphate isomerase (189 aa).

Fe cation contacts are provided by H88, H90, E97, and H136.

This sequence belongs to the archaeal-type GPI family. As to quaternary structure, homodimer.

It is found in the cytoplasm. The enzyme catalyses alpha-D-glucose 6-phosphate = beta-D-fructose 6-phosphate. It participates in carbohydrate degradation; glycolysis; D-glyceraldehyde 3-phosphate and glycerone phosphate from D-glucose: step 2/4. This chain is Glucose-6-phosphate isomerase, found in Thermococcus onnurineus (strain NA1).